The chain runs to 284 residues: F-box protein PP2-B5 (284 aa).

The F-box domain occupies 32-80 (ASFDDLPDDCLAIISSFTSTPRDAFLAALVSKSFGLQFNSDSVWEKFLP).

The sequence is that of F-box protein PP2-B5 (PP2B5) from Arabidopsis thaliana (Mouse-ear cress).